Reading from the N-terminus, the 393-residue chain is NAD(P)H-quinone oxidoreductase subunit H, chloroplastic (393 aa).

This sequence belongs to the complex I 49 kDa subunit family. As to quaternary structure, NDH is composed of at least 16 different subunits, 5 of which are encoded in the nucleus.

The protein localises to the plastid. It localises to the chloroplast thylakoid membrane. It catalyses the reaction a plastoquinone + NADH + (n+1) H(+)(in) = a plastoquinol + NAD(+) + n H(+)(out). The catalysed reaction is a plastoquinone + NADPH + (n+1) H(+)(in) = a plastoquinol + NADP(+) + n H(+)(out). In terms of biological role, NDH shuttles electrons from NAD(P)H:plastoquinone, via FMN and iron-sulfur (Fe-S) centers, to quinones in the photosynthetic chain and possibly in a chloroplast respiratory chain. The immediate electron acceptor for the enzyme in this species is believed to be plastoquinone. Couples the redox reaction to proton translocation, and thus conserves the redox energy in a proton gradient. The sequence is that of NAD(P)H-quinone oxidoreductase subunit H, chloroplastic from Cucumis sativus (Cucumber).